A 42-amino-acid chain; its full sequence is Beta-defensin 6 (42 aa).

Glutamine 1 is subject to Pyrrolidone carboxylic acid. Cystine bridges form between cysteine 9/cysteine 38, cysteine 16/cysteine 31, and cysteine 21/cysteine 39.

It belongs to the beta-defensin family. As to expression, neutrophilic granules.

The protein localises to the secreted. Has bactericidal activity. Active against E.coli ML35 and S.aureus 502A. The sequence is that of Beta-defensin 6 (DEFB6) from Bos taurus (Bovine).